Consider the following 265-residue polypeptide: Apolipoprotein A-I (265 aa).

Residues 1 to 16 (MKAAVLIWLFLMGSQA) form the signal peptide. 2 repeat units span residues 66-87 (LKLLDNWDSLTSTVNKLREQLG) and 88-109 (PVTQEFWDNLEKETEELRQEMS). The 10 X approximate tandem repeats stretch occupies residues 66 to 265 (LKLLDNWDSL…EEYTKKLSSQ (200 aa)). Met108 is modified (methionine sulfoxide). One copy of the 3; half-length repeat lies at 110–120 (KDLEEVKAQVQ). 5 tandem repeats follow at residues 121–142 (PYLDNFQKNWQEEMNLYSQKLE), 143–164 (PLRTELQEGALQKLQDLQEKLS), 165–186 (PLAEQVRDRARAHVNTLRTQLA), 187–208 (PYSDELRQRLATRLEALKENSG), and 209–230 (ASLAEYHAKASEHLSALGEKAK). Met134 is subject to Methionine sulfoxide. A 9; half-length repeat occupies 231-241 (PALDDLRQGLL). Residues 242–265 (PVLESFKVSFLSALEEYTKKLSSQ) form repeat 10.

It belongs to the apolipoprotein A1/A4/E family. In terms of assembly, homodimer. Interacts with APOA1BP and CLU. Component of a sperm activating protein complex (SPAP), consisting of APOA1, an immunoglobulin heavy chain, an immunoglobulin light chain and albumin. Interacts with NDRG1. Interacts with SCGB3A2. Interacts with NAXE and YJEFN3. In terms of processing, glycosylated. Palmitoylated. Post-translationally, phosphorylation sites are present in the extracellular medium.

The protein resides in the secreted. Participates in the reverse transport of cholesterol from tissues to the liver for excretion by promoting cholesterol efflux from tissues and by acting as a cofactor for the lecithin cholesterol acyltransferase (LCAT). As part of the SPAP complex, activates spermatozoa motility. In Aotus nancymaae (Ma's night monkey), this protein is Apolipoprotein A-I (APOA1).